Consider the following 149-residue polypeptide: Oligosaccharyltransferase complex subunit ostc (149 aa).

The Cytoplasmic segment spans residues 1-32; it reads METLFSLPFTVLECPNVKLKKPSWLHMPSAMT. A helical transmembrane segment spans residues 33 to 53; the sequence is VYAVVIVSYFLITGGIIYDVI. The Extracellular portion of the chain corresponds to 54–83; the sequence is VEPPSVGSMTDEHGHQRPVAFLAYRVNGQY. A helical transmembrane segment spans residues 84-104; sequence IMEGLASSFLFTMGGLGFIIL. Residues 105 to 117 are Cytoplasmic-facing; that stretch reads DRSNAPNIPKLNR. A helical transmembrane segment spans residues 118–138; that stretch reads FLLLFIGFVSVLLSFFMARVF. The Extracellular portion of the chain corresponds to 139–149; it reads MRMKLPGYLMG.

The protein belongs to the OSTC family. Specific component of the STT3A-containing form of the oligosaccharyltransferase (OST) complex.

It is found in the membrane. It participates in protein modification; protein glycosylation. Specific component of the STT3A-containing form of the oligosaccharyl transferase (OST) complex that catalyzes the initial transfer of a defined glycan (Glc(3)Man(9)GlcNAc(2) in eukaryotes) from the lipid carrier dolichol-pyrophosphate to an asparagine residue within an Asn-X-Ser/Thr consensus motif in nascent polypeptide chains, the first step in protein N-glycosylation. N-glycosylation occurs cotranslationally and the complex associates with the Sec61 complex at the channel-forming translocon complex that mediates protein translocation across the endoplasmic reticulum (ER). All subunits are required for a maximal enzyme activity. The protein is Oligosaccharyltransferase complex subunit ostc of Danio rerio (Zebrafish).